A 180-amino-acid polypeptide reads, in one-letter code: Probable DNA replication complex GINS protein PSF2 (180 aa).

This sequence belongs to the GINS2/PSF2 family. Component of the GINS complex which is a heterotetramer of gins1, gins2, gins3 and gins4.

The protein resides in the nucleus. In terms of biological role, required for correct functioning of the GINS complex, a complex that plays an essential role in the initiation of DNA replication, and progression of DNA replication forks. GINS complex is a core component of CDC45-MCM-GINS (CMG) helicase, the molecular machine that unwinds template DNA during replication, and around which the replisome is built. This chain is Probable DNA replication complex GINS protein PSF2 (psf-2), found in Caenorhabditis elegans.